A 478-amino-acid chain; its full sequence is UDP-N-acetylmuramate--L-alanine ligase (478 aa).

Residue 126–132 participates in ATP binding; it reads GTHGKTT.

Belongs to the MurCDEF family.

Its subcellular location is the cytoplasm. It catalyses the reaction UDP-N-acetyl-alpha-D-muramate + L-alanine + ATP = UDP-N-acetyl-alpha-D-muramoyl-L-alanine + ADP + phosphate + H(+). It participates in cell wall biogenesis; peptidoglycan biosynthesis. Its function is as follows. Cell wall formation. This is UDP-N-acetylmuramate--L-alanine ligase from Synechococcus sp. (strain JA-2-3B'a(2-13)) (Cyanobacteria bacterium Yellowstone B-Prime).